A 317-amino-acid chain; its full sequence is Transcription factor EC (317 aa).

The interval 1-90 is necessary for transcriptional transactivation; it reads MTFDCRVCDQ…GLTDAPCPSI (90 aa). Positions 110–163 constitute a bHLH domain; sequence QKKDNHNLIERRRRYNINYRIKELGTLIPKSNDPDMRWNKGTILKASVDYIKWL. The segment at 242–317 is necessary for transcriptional transactivation; it reads TSPEFYEQAV…SLSSEDGDEL (76 aa).

This sequence belongs to the MiT/TFE family. As to quaternary structure, homodimer. Forms heterodimers with MITF. Interacts with MITF. Forms heterodimers with TFE3. Expressed in osteoclast-like cells (at protein level). Expressed in cells of the mononuclear phagocyte lineage. Expressed in macrophages and in osteoclast-like cells.

Its subcellular location is the nucleus. Transcriptional regulator that acts as a repressor or an activator. Acts as a transcriptional transactivator on the proximal promoter region of the tartrate-resistant acid phosphatase (TRAP) E-box containing promoter. Collaborates with MITF in target gene activation. Acts as a transcriptional repressor on minimal promoter containing element F (that includes an E-box sequence). Binds to element F in an E-box sequence-specific manner. Acts as a transcriptional repressor on minimal promoter containing mu E3 enhancer sequence. Binds to mu E3 DNA sequence of the immunoglobulin heavy-chain gene enhancer. Binds DNA in a homo- or heterodimeric form. The chain is Transcription factor EC (Tfec) from Mus musculus (Mouse).